A 139-amino-acid chain; its full sequence is Nucleoside diphosphate kinase (139 aa).

ATP-binding residues include Lys-11, Phe-59, Arg-87, Thr-93, Arg-104, and Asn-114. His-117 functions as the Pros-phosphohistidine intermediate in the catalytic mechanism.

This sequence belongs to the NDK family. In terms of assembly, homotetramer. Requires Mg(2+) as cofactor.

Its subcellular location is the cytoplasm. The catalysed reaction is a 2'-deoxyribonucleoside 5'-diphosphate + ATP = a 2'-deoxyribonucleoside 5'-triphosphate + ADP. It catalyses the reaction a ribonucleoside 5'-diphosphate + ATP = a ribonucleoside 5'-triphosphate + ADP. In terms of biological role, major role in the synthesis of nucleoside triphosphates other than ATP. The ATP gamma phosphate is transferred to the NDP beta phosphate via a ping-pong mechanism, using a phosphorylated active-site intermediate. This is Nucleoside diphosphate kinase from Flavobacterium psychrophilum (strain ATCC 49511 / DSM 21280 / CIP 103535 / JIP02/86).